A 473-amino-acid polypeptide reads, in one-letter code: Arginine biosynthesis bifunctional protein ArgJ, mitochondrial (473 aa).

The substrate site is built by Thr201, Lys230, Thr241, Glu328, Asn468, and Thr473. Thr241 functions as the Nucleophile in the catalytic mechanism.

The protein belongs to the ArgJ family. As to quaternary structure, heterodimer of an alpha and a beta chain. Post-translationally, the alpha and beta chains are autoproteolytically processed from a single precursor protein within the mitochondrion.

The protein resides in the mitochondrion matrix. The catalysed reaction is N(2)-acetyl-L-ornithine + L-glutamate = N-acetyl-L-glutamate + L-ornithine. The enzyme catalyses L-glutamate + acetyl-CoA = N-acetyl-L-glutamate + CoA + H(+). It functions in the pathway amino-acid biosynthesis; L-arginine biosynthesis; L-ornithine and N-acetyl-L-glutamate from L-glutamate and N(2)-acetyl-L-ornithine (cyclic): step 1/1. Its pathway is amino-acid biosynthesis; L-arginine biosynthesis; N(2)-acetyl-L-ornithine from L-glutamate: step 1/4. Catalyzes two activities which are involved in the cyclic version of arginine biosynthesis: the synthesis of acetylglutamate from glutamate and acetyl-CoA, and of ornithine by transacetylation between acetylornithine and glutamate. The sequence is that of Arginine biosynthesis bifunctional protein ArgJ, mitochondrial from Paracoccidioides lutzii (strain ATCC MYA-826 / Pb01) (Paracoccidioides brasiliensis).